A 429-amino-acid polypeptide reads, in one-letter code: Hydrogenobyrinate a,c-diamide synthase (429 aa).

The GATase cobBQ-type domain occupies 240–429; sequence RTAVARDVAF…SFMHLIDFSE (190 aa). C323 (nucleophile) is an active-site residue.

This sequence belongs to the CobB/CbiA family. The cofactor is Mg(2+).

The catalysed reaction is hydrogenobyrinate + 2 L-glutamine + 2 ATP + 2 H2O = hydrogenobyrinate a,c-diamide + 2 L-glutamate + 2 ADP + 2 phosphate + 2 H(+). Its pathway is cofactor biosynthesis; adenosylcobalamin biosynthesis; cob(II)yrinate a,c-diamide from precorrin-2 (aerobic route): step 9/10. Catalyzes the ATP-dependent amidation of the two carboxylate groups at positions a and c of hydrogenobyrinate, using either L-glutamine or ammonia as the nitrogen source. The chain is Hydrogenobyrinate a,c-diamide synthase from Rhizobium meliloti (strain 1021) (Ensifer meliloti).